The sequence spans 455 residues: MSQRKYFGTDGIRGHVGLSNINPEFVLKLGWAVGCVLANGARKKVVIGKDTRVSGYMLESALEAGLSAAGVDVALLGPMPTPGIAYLTQTLRANAGIVISASHNLFEDNGIKFFSADGGKLPDSVELAIEAQLEKQLQTVPSAKLGKATRINDAAGRYIEFCKSTIPSLSRLSNLKIVVDCANGATYHIAPNVFSELGADVVPIGIKPDGFNINQECGSTAPELLREKVIAVGADIGIGLDGDGDRVILVDSLGNLVDGDQIIYIIAKDRHQRGVLHGGVVGTLMSNYGLELAITSLGVPFQRSKVGDRYVLETLREKDWKIGGETSGHIVCLDKTTTGDGIVAALQVLSIMVKQNKALHELTAGIQLLPQTLVNLKTNNAALLASNPDVIQAVKNLEKHLNGEGRVLLRPSGTEPLLRVMVEGANASIVKQQAQMLCDDISQIDKKMTESLPST.

Ser102 (phosphoserine intermediate) is an active-site residue. Mg(2+)-binding residues include Ser102, Asp241, Asp243, and Asp245. Ser102 is modified (phosphoserine).

The protein belongs to the phosphohexose mutase family. Mg(2+) is required as a cofactor. In terms of processing, activated by phosphorylation.

It catalyses the reaction alpha-D-glucosamine 1-phosphate = D-glucosamine 6-phosphate. Catalyzes the conversion of glucosamine-6-phosphate to glucosamine-1-phosphate. This Legionella pneumophila (strain Paris) protein is Phosphoglucosamine mutase.